Here is an 89-residue protein sequence, read N- to C-terminus: Small ribosomal subunit protein uS15 (89 aa).

The protein belongs to the universal ribosomal protein uS15 family. In terms of assembly, part of the 30S ribosomal subunit. Forms a bridge to the 50S subunit in the 70S ribosome, contacting the 23S rRNA.

One of the primary rRNA binding proteins, it binds directly to 16S rRNA where it helps nucleate assembly of the platform of the 30S subunit by binding and bridging several RNA helices of the 16S rRNA. Functionally, forms an intersubunit bridge (bridge B4) with the 23S rRNA of the 50S subunit in the ribosome. The sequence is that of Small ribosomal subunit protein uS15 from Serratia proteamaculans (strain 568).